A 177-amino-acid chain; its full sequence is DELTA-stichotoxin-Hmg2b (177 aa).

The interval 3–12 is plays an important role in the hemolytic activity; the sequence is ALAGTIIAGA. The tract at residues 11-30 is N-terminal region; the sequence is GASLGFQILDKVLGELGKVS. Phosphocholine-binding residues include Ser54, Val87, Ser105, Pro107, Tyr133, Tyr137, and Tyr138.

Belongs to the actinoporin family. Sea anemone subfamily. As to quaternary structure, octamer or nonamer in membranes. Monomer in the soluble state.

The protein resides in the secreted. The protein localises to the nematocyst. Its subcellular location is the target cell membrane. Functionally, pore-forming protein that forms cations-selective hydrophilic pores of around 1 nm and causes cytolysis. Pore formation is a multi-step process that involves specific recognition of membrane sphingomyelin (but neither cholesterol nor phosphatidylcholine) using aromatic rich region and adjacent phosphocholine (POC) binding site, firm binding to the membrane (mainly driven by hydrophobic interactions) accompanied by the transfer of the N-terminal region to the lipid-water interface and finally pore formation after oligomerization of monomers This toxin shows hemolytic activity. The polypeptide is DELTA-stichotoxin-Hmg2b (Heteractis magnifica (Magnificent sea anemone)).